The sequence spans 480 residues: MPKEVITQRSVDYNQWYLDIVREADLAEVAEVVRGCIVVKAHGWAIWELMQRALDDRIKATGHANVQFPLLIPKSFIMKEAEHVEGFAPEVAEVTRAGGEELAEPYIIRPTSETIIGYFYSKWIRSYRDLPLLYNQWANVMRWEMRTRPFLRTAEFWWQEGHTAHATEAEAEEETLRILHDVYADFVEKEMAVPVIRGLKTEKEKFPGALRSYCIEAMMQDGRALQAGTSHNLGQNFARAFDITFTDQNNTIQYAWTTSWGVSTRLIGALIMTHSDDEGLVLPPRLAPIQVVVVPIYKNDEERSLVMAAVEQMTAAWKGRLRFKVDDRDNYSPGYKFNEWELKGVPVRIEVGPKDVAKETVALARRDIPGKAGKSFVPQAGLTERIEALLNEMQTALFQRALAFREAHTADVTSYDELKEQIERGFARAYWAGDTADEKRIQEETRATIRCIPLEQPGSVGRCVYTGRETDRQVIFARAY.

It belongs to the class-II aminoacyl-tRNA synthetase family. ProS type 3 subfamily. In terms of assembly, homodimer.

It is found in the cytoplasm. The catalysed reaction is tRNA(Pro) + L-proline + ATP = L-prolyl-tRNA(Pro) + AMP + diphosphate. Its function is as follows. Catalyzes the attachment of proline to tRNA(Pro) in a two-step reaction: proline is first activated by ATP to form Pro-AMP and then transferred to the acceptor end of tRNA(Pro). This chain is Proline--tRNA ligase, found in Chloroflexus aurantiacus (strain ATCC 29364 / DSM 637 / Y-400-fl).